The sequence spans 533 residues: Retinoid isomerohydrolase (533 aa).

Position 2 is an N-acetylserine (S2). A phosphothreonine mark is found at T101 and T105. C112 is lipidated: S-palmitoyl cysteine; in membrane form. K113 carries the post-translational modification N6-acetyllysine. Position 117 is a phosphoserine (S117). A Fe cation-binding site is contributed by H180. C231 is lipidated: S-palmitoyl cysteine; in membrane form. The Fe cation site is built by H241 and H313. S-palmitoyl cysteine; in membrane form attachment occurs at residues C329 and C330. Residue H527 participates in Fe cation binding.

The protein belongs to the carotenoid oxygenase family. In terms of assembly, interacts with MYO7A; this mediates light-dependent intracellular transport of RPE65. It depends on Fe(2+) as a cofactor. Palmitoylation by LRAT regulates ligand binding specificity; the palmitoylated form (membrane form) specifically binds all-trans-retinyl-palmitate, while the soluble unpalmitoylated form binds all-trans-retinol (vitamin A). In terms of tissue distribution, retinal pigment epithelium specific.

The protein localises to the cytoplasm. Its subcellular location is the cell membrane. It is found in the microsome membrane. It carries out the reaction an all-trans-retinyl ester + H2O = 11-cis-retinol + a fatty acid + H(+). The catalysed reaction is lutein = (3R,3'S)-zeaxanthin. The enzyme catalyses all-trans-retinyl hexadecanoate + H2O = 11-cis-retinol + hexadecanoate + H(+). In terms of biological role, critical isomerohydrolase in the retinoid cycle involved in regeneration of 11-cis-retinal, the chromophore of rod and cone opsins. Catalyzes the cleavage and isomerization of all-trans-retinyl fatty acid esters to 11-cis-retinol which is further oxidized by 11-cis retinol dehydrogenase to 11-cis-retinal for use as visual chromophore. Essential for the production of 11-cis retinal for both rod and cone photoreceptors. Also capable of catalyzing the isomerization of lutein to meso-zeaxanthin an eye-specific carotenoid. The soluble form binds vitamin A (all-trans-retinol), making it available for LRAT processing to all-trans-retinyl ester. The membrane form, palmitoylated by LRAT, binds all-trans-retinyl esters, making them available for IMH (isomerohydrolase) processing to all-cis-retinol. The soluble form is regenerated by transferring its palmitoyl groups onto 11-cis-retinol, a reaction catalyzed by LRAT. This is Retinoid isomerohydrolase (RPE65) from Canis lupus familiaris (Dog).